The chain runs to 387 residues: Gamma-butyrobetaine dioxygenase (387 aa).

Zn(2+) contacts are provided by cysteine 38, cysteine 40, cysteine 43, and histidine 82. Histidine 202, aspartate 204, and histidine 347 together coordinate Fe cation. Serine 351 carries the post-translational modification Phosphoserine.

Belongs to the gamma-BBH/TMLD family. Fe(2+) serves as cofactor. Requires L-ascorbate as cofactor.

The protein localises to the cytoplasm. The enzyme catalyses 4-(trimethylamino)butanoate + 2-oxoglutarate + O2 = carnitine + succinate + CO2. It functions in the pathway amine and polyamine biosynthesis; carnitine biosynthesis. In terms of biological role, catalyzes the formation of L-carnitine from gamma-butyrobetaine. The chain is Gamma-butyrobetaine dioxygenase (BBOX1) from Pongo abelii (Sumatran orangutan).